Consider the following 467-residue polypeptide: Asparagine--tRNA ligase (467 aa).

This sequence belongs to the class-II aminoacyl-tRNA synthetase family. As to quaternary structure, homodimer.

The protein resides in the cytoplasm. It carries out the reaction tRNA(Asn) + L-asparagine + ATP = L-asparaginyl-tRNA(Asn) + AMP + diphosphate + H(+). This chain is Asparagine--tRNA ligase, found in Actinobacillus pleuropneumoniae serotype 3 (strain JL03).